The primary structure comprises 147 residues: Deoxyuridine 5'-triphosphate nucleotidohydrolase (147 aa).

Substrate is bound by residues 67–69, Asn80, and 84–86; these read RSG and TID.

Belongs to the dUTPase family. It depends on Mg(2+) as a cofactor.

It catalyses the reaction dUTP + H2O = dUMP + diphosphate + H(+). It functions in the pathway pyrimidine metabolism; dUMP biosynthesis; dUMP from dCTP (dUTP route): step 2/2. Functionally, this enzyme is involved in nucleotide metabolism: it produces dUMP, the immediate precursor of thymidine nucleotides and it decreases the intracellular concentration of dUTP so that uracil cannot be incorporated into DNA. The chain is Deoxyuridine 5'-triphosphate nucleotidohydrolase from Anaeromyxobacter sp. (strain Fw109-5).